The following is a 480-amino-acid chain: Aspartyl/glutamyl-tRNA(Asn/Gln) amidotransferase subunit B (480 aa).

It belongs to the GatB/GatE family. GatB subfamily. Heterotrimer of A, B and C subunits.

It carries out the reaction L-glutamyl-tRNA(Gln) + L-glutamine + ATP + H2O = L-glutaminyl-tRNA(Gln) + L-glutamate + ADP + phosphate + H(+). The enzyme catalyses L-aspartyl-tRNA(Asn) + L-glutamine + ATP + H2O = L-asparaginyl-tRNA(Asn) + L-glutamate + ADP + phosphate + 2 H(+). Its function is as follows. Allows the formation of correctly charged Asn-tRNA(Asn) or Gln-tRNA(Gln) through the transamidation of misacylated Asp-tRNA(Asn) or Glu-tRNA(Gln) in organisms which lack either or both of asparaginyl-tRNA or glutaminyl-tRNA synthetases. The reaction takes place in the presence of glutamine and ATP through an activated phospho-Asp-tRNA(Asn) or phospho-Glu-tRNA(Gln). The sequence is that of Aspartyl/glutamyl-tRNA(Asn/Gln) amidotransferase subunit B from Streptococcus pneumoniae (strain P1031).